The chain runs to 391 residues: MVTQNKKILIITGSFGNGHMQVTQSIVNQLNEMNLNHLSVIQHDLFMEAHPIMTSICKKWYINSFKYFRNTYKRFYYSRPNELDKCFYKYYGLNKLINLLIKEKPDLILLTFPTPVMSVLTEQFNINIPIATVMTDYRMHKNWITPYSQRYYVATKDTKDDFIEAGVPASYIKVTGIPIADKFEESIDKEEWLSQQHLDPSKPTILMSAGAFGVSKGFDYMINNILEKSPNSQVVMICGRSKELKRSLKAKFKDNPSVKILGYTNHMNEWMASSQLMITKPGGITISEGLSRCIPMIFLNPAPGQELENAYYFESKGFGKIADTPNEAIDIVSDLTNNEETLKVMSSKMLESKVGYSTRKICKDLLDLIGHSSQPDEIYGKVPLYARFFVK.

This sequence belongs to the glycosyltransferase 28 family. UgtP subfamily.

The protein localises to the cell membrane. The catalysed reaction is a 1,2-diacyl-3-O-(beta-D-glucopyranosyl)-sn-glycerol + UDP-alpha-D-glucose = a 1,2-diacyl-3-O-(beta-D-Glc-(1-&gt;6)-beta-D-Glc)-sn-glycerol + UDP + H(+). The enzyme catalyses a 1,2-diacyl-sn-glycerol + UDP-alpha-D-glucose = a 1,2-diacyl-3-O-(beta-D-glucopyranosyl)-sn-glycerol + UDP + H(+). It functions in the pathway glycolipid metabolism; diglucosyl-diacylglycerol biosynthesis. Functionally, processive glucosyltransferase involved in the biosynthesis of both the bilayer- and non-bilayer-forming membrane glucolipids. Is able to successively transfer two glucosyl residues to diacylglycerol (DAG), thereby catalyzing the formation of beta-monoglucosyl-DAG (3-O-(beta-D-glucopyranosyl)-1,2-diacyl-sn-glycerol) and beta-diglucosyl-DAG (3-O-(beta-D-glucopyranosyl-beta-(1-&gt;6)-D-glucopyranosyl)-1,2-diacyl-sn-glycerol). Beta-diglucosyl-DAG is the predominant glycolipid found in Bacillales and is also used as a membrane anchor for lipoteichoic acid (LTA). In Staphylococcus epidermidis (strain ATCC 12228 / FDA PCI 1200), this protein is Processive diacylglycerol beta-glucosyltransferase.